The primary structure comprises 425 residues: Serine--tRNA ligase (425 aa).

L-serine is bound at residue 233-235; it reads TAE. 264 to 266 serves as a coordination point for ATP; sequence RAE. L-serine is bound at residue Glu287. Residue 351–354 participates in ATP binding; that stretch reads EISS. Ser387 lines the L-serine pocket.

It belongs to the class-II aminoacyl-tRNA synthetase family. Type-1 seryl-tRNA synthetase subfamily. In terms of assembly, homodimer. The tRNA molecule binds across the dimer.

It is found in the cytoplasm. It catalyses the reaction tRNA(Ser) + L-serine + ATP = L-seryl-tRNA(Ser) + AMP + diphosphate + H(+). The enzyme catalyses tRNA(Sec) + L-serine + ATP = L-seryl-tRNA(Sec) + AMP + diphosphate + H(+). It participates in aminoacyl-tRNA biosynthesis; selenocysteinyl-tRNA(Sec) biosynthesis; L-seryl-tRNA(Sec) from L-serine and tRNA(Sec): step 1/1. In terms of biological role, catalyzes the attachment of serine to tRNA(Ser). Is also able to aminoacylate tRNA(Sec) with serine, to form the misacylated tRNA L-seryl-tRNA(Sec), which will be further converted into selenocysteinyl-tRNA(Sec). In Clostridium perfringens (strain 13 / Type A), this protein is Serine--tRNA ligase.